The chain runs to 213 residues: High frequency lysogenization protein HflD homolog (213 aa).

It belongs to the HflD family.

The protein resides in the cytoplasm. Its subcellular location is the cell inner membrane. This Nitrosococcus oceani (strain ATCC 19707 / BCRC 17464 / JCM 30415 / NCIMB 11848 / C-107) protein is High frequency lysogenization protein HflD homolog.